Consider the following 215-residue polypeptide: Rod-determining factor A (215 aa).

Involved in cell-shape determination. Required for the formation of rods and wild-type-like motility. This Haloferax volcanii (strain ATCC 29605 / DSM 3757 / JCM 8879 / NBRC 14742 / NCIMB 2012 / VKM B-1768 / DS2) (Halobacterium volcanii) protein is Rod-determining factor A.